Here is a 415-residue protein sequence, read N- to C-terminus: DNA polymerase IV (415 aa).

Positions 15 to 196 (ILHVDMNCFF…LSVEAMHGIG (182 aa)) constitute a UmuC domain. Residues D19 and D115 each contribute to the Mg(2+) site. E116 is an active-site residue. Positions 235–246 (KRAKGTDDREVD) are enriched in basic and acidic residues. A disordered region spans residues 235–260 (KRAKGTDDREVDPSQMGQHKSVGNSM). Positions 249–260 (QMGQHKSVGNSM) are enriched in polar residues.

It belongs to the DNA polymerase type-Y family. As to quaternary structure, monomer. The cofactor is Mg(2+).

The protein localises to the cytoplasm. The enzyme catalyses DNA(n) + a 2'-deoxyribonucleoside 5'-triphosphate = DNA(n+1) + diphosphate. In terms of biological role, poorly processive, error-prone DNA polymerase involved in untargeted mutagenesis. Copies undamaged DNA at stalled replication forks, which arise in vivo from mismatched or misaligned primer ends. These misaligned primers can be extended by PolIV. Exhibits no 3'-5' exonuclease (proofreading) activity. May be involved in translesional synthesis, in conjunction with the beta clamp from PolIII. In Bacillus cereus (strain ATCC 14579 / DSM 31 / CCUG 7414 / JCM 2152 / NBRC 15305 / NCIMB 9373 / NCTC 2599 / NRRL B-3711), this protein is DNA polymerase IV.